Consider the following 159-residue polypeptide: MFTIKTDDLTHPAVQALVAYHISGMLQQSPPESSHALDVQKLRNPTVTFWSVWEGEQLAGIGALKLLDDKHGELKSMRTAPNYLRRGVASLILRHILQVAQDRCLHRLSLETGTQAGFTACHQLYLKHGFADCEPFADYRLDPHSRFLSLTLCENNELP.

The region spanning 4–153 is the N-acetyltransferase domain; that stretch reads IKTDDLTHPA…HSRFLSLTLC (150 aa).

It belongs to the acetyltransferase family.

This is an uncharacterized protein from Escherichia coli (strain K12).